Consider the following 297-residue polypeptide: Phosphatidylglycerol--prolipoprotein diacylglyceryl transferase (297 aa).

Helical transmembrane passes span 20 to 40 (FITI…GLFV), 57 to 77 (EILP…YVIF), 105 to 125 (AVWE…ISII), and 133 to 153 (INLK…QSIG). Residue Arg154 coordinates a 1,2-diacyl-sn-glycero-3-phospho-(1'-sn-glycerol). 3 consecutive transmembrane segments (helical) span residues 193-213 (PTFL…IIIF), 225-245 (GFIS…IEGL), and 266-286 (AQFI…FLRL).

The protein belongs to the Lgt family.

It localises to the cell inner membrane. The catalysed reaction is L-cysteinyl-[prolipoprotein] + a 1,2-diacyl-sn-glycero-3-phospho-(1'-sn-glycerol) = an S-1,2-diacyl-sn-glyceryl-L-cysteinyl-[prolipoprotein] + sn-glycerol 1-phosphate + H(+). The protein operates within protein modification; lipoprotein biosynthesis (diacylglyceryl transfer). Functionally, catalyzes the transfer of the diacylglyceryl group from phosphatidylglycerol to the sulfhydryl group of the N-terminal cysteine of a prolipoprotein, the first step in the formation of mature lipoproteins. In Prochlorococcus marinus (strain MIT 9215), this protein is Phosphatidylglycerol--prolipoprotein diacylglyceryl transferase.